The primary structure comprises 185 residues: uncharacterized protein (185 aa).

Helical transmembrane passes span 5–25, 63–83, 97–117, and 149–169; these read SFLI…RIWL, LATV…LILI, FLGL…VLLI, and IIPA…GLQF.

The protein belongs to the YggT family.

It localises to the cell membrane. This is an uncharacterized protein from Vibrio alginolyticus.